Here is a 364-residue protein sequence, read N- to C-terminus: Aminomethyltransferase (364 aa).

This sequence belongs to the GcvT family. The glycine cleavage system is composed of four proteins: P, T, L and H.

The catalysed reaction is N(6)-[(R)-S(8)-aminomethyldihydrolipoyl]-L-lysyl-[protein] + (6S)-5,6,7,8-tetrahydrofolate = N(6)-[(R)-dihydrolipoyl]-L-lysyl-[protein] + (6R)-5,10-methylene-5,6,7,8-tetrahydrofolate + NH4(+). Functionally, the glycine cleavage system catalyzes the degradation of glycine. This Shewanella oneidensis (strain ATCC 700550 / JCM 31522 / CIP 106686 / LMG 19005 / NCIMB 14063 / MR-1) protein is Aminomethyltransferase.